The sequence spans 346 residues: N-acetyl-gamma-glutamyl-phosphate reductase (346 aa).

C150 is an active-site residue.

The protein belongs to the NAGSA dehydrogenase family. Type 1 subfamily.

The protein resides in the cytoplasm. The catalysed reaction is N-acetyl-L-glutamate 5-semialdehyde + phosphate + NADP(+) = N-acetyl-L-glutamyl 5-phosphate + NADPH + H(+). It participates in amino-acid biosynthesis; L-arginine biosynthesis; N(2)-acetyl-L-ornithine from L-glutamate: step 3/4. Its function is as follows. Catalyzes the NADPH-dependent reduction of N-acetyl-5-glutamyl phosphate to yield N-acetyl-L-glutamate 5-semialdehyde. The chain is N-acetyl-gamma-glutamyl-phosphate reductase from Alkaliphilus metalliredigens (strain QYMF).